Reading from the N-terminus, the 449-residue chain is Glycine--tRNA ligase (449 aa).

Positions 100 and 158 each coordinate substrate. Residues 190-192 (RNE), 200-205 (FRVREF), 275-276 (EL), and 319-322 (GIER) contribute to the ATP site. 205 to 209 (FEQFE) is a substrate binding site. 315 to 319 (EPSVG) serves as a coordination point for substrate.

This sequence belongs to the class-II aminoacyl-tRNA synthetase family. As to quaternary structure, homodimer.

It localises to the cytoplasm. The catalysed reaction is tRNA(Gly) + glycine + ATP = glycyl-tRNA(Gly) + AMP + diphosphate. Catalyzes the attachment of glycine to tRNA(Gly). This is Glycine--tRNA ligase from Mycoplasma pneumoniae (strain ATCC 29342 / M129 / Subtype 1) (Mycoplasmoides pneumoniae).